A 324-amino-acid chain; its full sequence is Putative arsenical pump-driving ATPase (324 aa).

An ATP-binding site is contributed by 21-28 (GKGGVGKT).

Belongs to the arsA ATPase family.

The enzyme catalyses arsenite(in) + ATP + H2O = arsenite(out) + ADP + phosphate + H(+). In terms of biological role, anion-transporting ATPase. Catalyzes the extrusion of arsenite. The chain is Putative arsenical pump-driving ATPase from Methanothermobacter thermautotrophicus (strain ATCC 29096 / DSM 1053 / JCM 10044 / NBRC 100330 / Delta H) (Methanobacterium thermoautotrophicum).